The following is a 352-amino-acid chain: Potassium/proton antiporter CemA (352 aa).

3 helical membrane-spanning segments follow: residues 52–72 (VLVS…IHFF), 227–247 (IAAL…IILF), and 312–332 (IILL…KYWI).

Belongs to the CemA family.

It is found in the plastid. The protein resides in the chloroplast inner membrane. The enzyme catalyses K(+)(in) + H(+)(out) = K(+)(out) + H(+)(in). In terms of biological role, contributes to K(+)/H(+) antiport activity by supporting proton efflux to control proton extrusion and homeostasis in chloroplasts in a light-dependent manner to modulate photosynthesis. Prevents excessive induction of non-photochemical quenching (NPQ) under continuous-light conditions. Indirectly promotes efficient inorganic carbon uptake into chloroplasts. The chain is Potassium/proton antiporter CemA from Oltmannsiellopsis viridis (Marine flagellate).